A 336-amino-acid chain; its full sequence is Phenylalanine--tRNA ligase alpha subunit (336 aa).

Residue glutamate 263 coordinates Mg(2+).

Belongs to the class-II aminoacyl-tRNA synthetase family. Phe-tRNA synthetase alpha subunit type 1 subfamily. As to quaternary structure, tetramer of two alpha and two beta subunits. Mg(2+) is required as a cofactor.

It is found in the cytoplasm. It catalyses the reaction tRNA(Phe) + L-phenylalanine + ATP = L-phenylalanyl-tRNA(Phe) + AMP + diphosphate + H(+). In Thermosynechococcus vestitus (strain NIES-2133 / IAM M-273 / BP-1), this protein is Phenylalanine--tRNA ligase alpha subunit.